We begin with the raw amino-acid sequence, 102 residues long: Large ribosomal subunit protein bL21 (102 aa).

The segment covering 77 to 88 has biased composition (basic residues); sequence KPKKHTHTKQGH. Residues 77–102 are disordered; the sequence is KPKKHTHTKQGHRQPYTKVTINKINA. The span at 93–102 shows a compositional bias: polar residues; it reads TKVTINKINA.

It belongs to the bacterial ribosomal protein bL21 family. Part of the 50S ribosomal subunit. Contacts protein L20.

Functionally, this protein binds to 23S rRNA in the presence of protein L20. The chain is Large ribosomal subunit protein bL21 from Limosilactobacillus reuteri (strain DSM 20016) (Lactobacillus reuteri).